A 418-amino-acid chain; its full sequence is L-methionine/branched-chain amino acid exporter YjeH (418 aa).

The Periplasmic portion of the chain corresponds to 1–15 (MSGLKQELGLAQGIG). The chain crosses the membrane as a helical span at residues 16-36 (LLSTSLLGTGVFAVPALAALV). The Cytoplasmic portion of the chain corresponds to 37–41 (AGNNS). A helical transmembrane segment spans residues 42–62 (LWAWPVLIILVFPIAIVFAIL). Residues 63 to 89 (GRHYPSAGGVAHFVGMAFGSRLERVTG) lie on the Periplasmic side of the membrane. The helical transmembrane segment at 90 to 110 (WLFLSVIPVGLPAALQIAAGF) threads the bilayer. Topologically, residues 111–113 (GQA) are cytoplasmic. A helical membrane pass occupies residues 114–134 (MFGWHSWQLLLAELGTLALVW). Residues 135-147 (YIGTRGASSSANL) lie on the Periplasmic side of the membrane. A helical membrane pass occupies residues 148-168 (QTVIAGLIVALIVAIWWAGDI). The Cytoplasmic portion of the chain corresponds to 169-182 (KPANIPFPAPGNIE). A helical transmembrane segment spans residues 183–203 (LTGLFAALSVMFWCFVGLEAF). Topologically, residues 204-219 (AHLASEFKNPERDFPR) are periplasmic. Residues 220–240 (ALMIGLLLAGLVYWGCTVVVL) traverse the membrane as a helical segment. Residues 241–257 (HFDAYGEKMAAAASLPK) lie on the Cytoplasmic side of the membrane. Residues 258–278 (IVVQLFGVGALWIACVIGYLA) form a helical membrane-spanning segment. At 279–317 (CFASLNIYIQSFARLVWSQAQHNPDHYLARLSSRHIPNN) the chain is on the periplasmic side. A helical transmembrane segment spans residues 318–338 (ALNAVLGCCVVSTLVIHALEI). Residues 339–341 (NLD) lie on the Cytoplasmic side of the membrane. A helical membrane pass occupies residues 342-362 (ALIIYANGIFIMIYLLCMLAG). Residues 363–378 (CKLLQGRYRLLAVVGG) lie on the Periplasmic side of the membrane. The chain crosses the membrane as a helical span at residues 379–399 (LLCVLLLAMVGWKSLYALIML). The Cytoplasmic segment spans residues 400–418 (AGLWLLLPKRKTPENGITT).

It belongs to the amino acid-polyamine-organocation (APC) superfamily. Amino acid efflux (AAE) (TC 2.A.3.13) family.

The protein localises to the cell inner membrane. It carries out the reaction L-methionine(in) + H(+)(out) = L-methionine(out) + H(+)(in). It catalyses the reaction L-leucine(in) + H(+)(out) = L-leucine(out) + H(+)(in). The enzyme catalyses L-isoleucine(in) + H(+)(out) = L-isoleucine(out) + H(+)(in). The catalysed reaction is L-valine(in) + H(+)(out) = L-valine(out) + H(+)(in). Its activity is regulated as follows. Efflux of L-methionine is inhibited by the proton ionophore carbonyl cyanide m-chlorophenylhydrazone (CCCP). Catalyzes the efflux of L-methionine, L-leucine, L-isoleucine and L-valine. Activity is dependent on electrochemical potential. The polypeptide is L-methionine/branched-chain amino acid exporter YjeH (yjeH) (Escherichia coli (strain K12)).